We begin with the raw amino-acid sequence, 284 residues long: Ribose-5-phosphate isomerase (284 aa).

This sequence belongs to the ribose 5-phosphate isomerase family.

It localises to the cytoplasm. It catalyses the reaction aldehydo-D-ribose 5-phosphate = D-ribulose 5-phosphate. The protein operates within carbohydrate degradation; pentose phosphate pathway; D-ribose 5-phosphate from D-ribulose 5-phosphate (non-oxidative stage): step 1/1. The chain is Ribose-5-phosphate isomerase (RKI1) from Lodderomyces elongisporus (strain ATCC 11503 / CBS 2605 / JCM 1781 / NBRC 1676 / NRRL YB-4239) (Yeast).